We begin with the raw amino-acid sequence, 1065 residues long: Cellulose synthase A catalytic subunit 3 [UDP-forming] (1065 aa).

Over M1–M260 the chain is Cytoplasmic. At S3 the chain carries Phosphoserine. Positions 20, 23, 39, 42, 47, 50, 62, and 65 each coordinate Zn(2+). The segment at C20 to K66 adopts an RING-type; degenerate zinc-finger fold. A phosphoserine mark is found at S151, S211, and S216. Residues V261 to V281 form a helical membrane-spanning segment. Residues P282 to N283 are Extracellular-facing. A helical membrane pass occupies residues A284 to L304. The Cytoplasmic segment spans residues D305–T842. The UDP-alpha-D-glucose site is built by S343, K349, E350, and D379. D379 is an active-site residue. Residues V433–A457 adopt a coiled-coil conformation. UDP-alpha-D-glucose is bound at residue K520. Residues K521 and D545 each coordinate Mn(2+). The segment at S643–T672 is disordered. The span at A656–D670 shows a compositional bias: basic and acidic residues. D765 is a catalytic residue. The chain crosses the membrane as a helical span at residues I843–F863. The Extracellular portion of the chain corresponds to T864 to N874. The chain crosses the membrane as a helical span at residues I875–M895. At R896–Q910 the chain is on the cytoplasmic side. A helical transmembrane segment spans residues F911–V931. Over L932–T961 the chain is Extracellular. N938 carries an N-linked (GlcNAc...) asparagine glycan. The helical transmembrane segment at T962–V982 threads the bilayer. Residues S983 to W993 lie on the Cytoplasmic side of the membrane. A helical transmembrane segment spans residues G994–L1014. At K1015–R1023 the chain is on the extracellular side. Residues T1024–V1044 traverse the membrane as a helical segment. The Cytoplasmic portion of the chain corresponds to R1045–C1065.

Belongs to the glycosyltransferase 2 family. Plant cellulose synthase subfamily. As to quaternary structure, homodimer. Interacts with CESA1 and CESA6. Interacts with STL1 and STL2, but not with GOT1. Binds to CSI1 and CSI3. Interacts with PAT24/TIP1. Requires Zn(2+) as cofactor. The cofactor is Mn(2+). Post-translationally, palmitoylated, in part by PAT24/TIP1. In terms of tissue distribution, expressed in young plants, flowers and roots, and to a lower extent in leaves and stems. Localized in all cells except meristematic cells. Accumulates particularly in root caps, root hairs, epidermal layer, midveins of leaves and anthers. Not present in old tissues.

It localises to the cell membrane. It is found in the golgi apparatus membrane. It carries out the reaction [(1-&gt;4)-beta-D-glucosyl](n) + UDP-alpha-D-glucose = [(1-&gt;4)-beta-D-glucosyl](n+1) + UDP + H(+). It participates in glycan metabolism; plant cellulose biosynthesis. Its function is as follows. Catalytic subunit of cellulose synthase terminal complexes ('rosettes'), required for beta-1,4-glucan microfibril crystallization, a major mechanism of the cell wall formation. Involved in the primary cell wall formation, especially in roots. This chain is Cellulose synthase A catalytic subunit 3 [UDP-forming], found in Arabidopsis thaliana (Mouse-ear cress).